The chain runs to 1179 residues: Putative ankyrin repeat protein RF_0381 (1179 aa).

18 ANK repeats span residues 282 to 311, 604 to 633, 637 to 666, 670 to 699, 703 to 732, 736 to 765, 769 to 798, 802 to 831, 833 to 860, 864 to 893, 897 to 926, 930 to 959, 963 to 992, 996 to 1025, 1029 to 1058, 1062 to 1091, 1095 to 1124, and 1128 to 1157; these read NGYQ…MHRQ, NKDQ…NPNA, HGVI…DVNA, NGET…NIHA, NGET…DVNA, NGLT…DVNA, SGET…DVNA, NGET…NVNN, KTIL…DIHA, SGET…DIHA, SGET…DINT, DGLT…DVNA, and SGET…DINL.

In Rickettsia felis (strain ATCC VR-1525 / URRWXCal2) (Rickettsia azadi), this protein is Putative ankyrin repeat protein RF_0381.